The chain runs to 259 residues: Synaptophysin-like protein 1 (259 aa).

The Cytoplasmic segment spans residues 1–33 (MAPNIYLVRQRISRLGQRMSGFQINLNPLKEPL). Residues 28 to 237 (PLKEPLGFIK…NAWFVYKETS (210 aa)) form the MARVEL domain. Residues 34-54 (GFIKVLEWIASIFAFATCGGF) form a helical membrane-spanning segment. The Vesicular segment spans residues 55-116 (KGQTEIQVNC…LIGDYSSSAQ (62 aa)). An N-linked (GlcNAc...) asparagine glycan is attached at asparagine 71. The helical transmembrane segment at 117–137 (FYVTFAVFVFLYCIAALLLYV) threads the bilayer. At 138 to 150 (GYTSLYLDSRKLP) the chain is on the cytoplasmic side. A helical transmembrane segment spans residues 151–171 (MIDFVVTLVATFLWLVSTSAW). Residues 172–212 (AKALTDIKIATGHNIIDELPPCKKKAVLCYFGSVTSMGSLN) are Vesicular-facing. An N-linked (GlcNAc...) asparagine glycan is attached at asparagine 212. A helical membrane pass occupies residues 213–233 (VSVIFGFLNMILWGGNAWFVY). At 234–259 (KETSLHSPSNTSAPHSQGGIPPPTGI) the chain is on the cytoplasmic side.

Belongs to the synaptophysin/synaptobrevin family.

It localises to the cytoplasmic vesicle membrane. The protein resides in the melanosome. This is Synaptophysin-like protein 1 (SYPL1) from Homo sapiens (Human).